We begin with the raw amino-acid sequence, 420 residues long: ATP phosphoribosyltransferase regulatory subunit (420 aa).

This sequence belongs to the class-II aminoacyl-tRNA synthetase family. HisZ subfamily. In terms of assembly, heteromultimer composed of HisG and HisZ subunits.

Its subcellular location is the cytoplasm. It functions in the pathway amino-acid biosynthesis; L-histidine biosynthesis; L-histidine from 5-phospho-alpha-D-ribose 1-diphosphate: step 1/9. Required for the first step of histidine biosynthesis. May allow the feedback regulation of ATP phosphoribosyltransferase activity by histidine. This Bacillus thuringiensis (strain Al Hakam) protein is ATP phosphoribosyltransferase regulatory subunit.